The primary structure comprises 364 residues: Succinate--CoA ligase [ADP-forming] subunit beta (364 aa).

One can recognise an ATP-grasp domain in the interval 9 to 229 (KNIFKKYGIP…EFEEYKNKEK (221 aa)). ATP-binding positions include Lys43, 50–52 (GRG), Glu89, Leu92, and Glu97. Residues Asn189 and Asp203 each contribute to the Mg(2+) site. Substrate contacts are provided by residues Asn246 and 303–305 (GIT).

This sequence belongs to the succinate/malate CoA ligase beta subunit family. Heterotetramer of two alpha and two beta subunits. Requires Mg(2+) as cofactor.

It catalyses the reaction succinate + ATP + CoA = succinyl-CoA + ADP + phosphate. It carries out the reaction GTP + succinate + CoA = succinyl-CoA + GDP + phosphate. It participates in carbohydrate metabolism; tricarboxylic acid cycle; succinate from succinyl-CoA (ligase route): step 1/1. Succinyl-CoA synthetase functions in the citric acid cycle (TCA), coupling the hydrolysis of succinyl-CoA to the synthesis of either ATP or GTP and thus represents the only step of substrate-level phosphorylation in the TCA. The beta subunit provides nucleotide specificity of the enzyme and binds the substrate succinate, while the binding sites for coenzyme A and phosphate are found in the alpha subunit. In Methanocaldococcus jannaschii (strain ATCC 43067 / DSM 2661 / JAL-1 / JCM 10045 / NBRC 100440) (Methanococcus jannaschii), this protein is Succinate--CoA ligase [ADP-forming] subunit beta.